A 472-amino-acid polypeptide reads, in one-letter code: 3-isopropylmalate dehydratase large subunit (472 aa).

[4Fe-4S] cluster contacts are provided by cysteine 347, cysteine 407, and cysteine 410.

It belongs to the aconitase/IPM isomerase family. LeuC type 1 subfamily. In terms of assembly, heterodimer of LeuC and LeuD. [4Fe-4S] cluster is required as a cofactor.

The enzyme catalyses (2R,3S)-3-isopropylmalate = (2S)-2-isopropylmalate. It functions in the pathway amino-acid biosynthesis; L-leucine biosynthesis; L-leucine from 3-methyl-2-oxobutanoate: step 2/4. Functionally, catalyzes the isomerization between 2-isopropylmalate and 3-isopropylmalate, via the formation of 2-isopropylmaleate. This is 3-isopropylmalate dehydratase large subunit from Opitutus terrae (strain DSM 11246 / JCM 15787 / PB90-1).